Here is a 1021-residue protein sequence, read N- to C-terminus: Probable calcium-transporting ATPase 6, plasma membrane-type (1021 aa).

Over 1 to 155 (MEGGRSWSIE…RSFWMFVWDA (155 aa)) the chain is Cytoplasmic. 2 helical membrane-spanning segments follow: residues 156–176 (LHDL…VVGL) and 181–201 (WPMG…VVLV). Topologically, residues 202–241 (TATSDYQQARKFMELDREKQKIYIRVTRDKKTKEVLVHDL) are cytoplasmic. 2 helical membrane-spanning segments follow: residues 242-262 (VVGD…GLFI) and 338-358 (VATI…LVLL). Over 359–384 (ARFLADKGMHVGLLNWSANDALTIVN) the chain is Cytoplasmic. Residues 385 to 405 (YFAIAVTIIVVAVPEGLPLAV) traverse the membrane as a helical segment. D441 serves as the catalytic 4-aspartylphosphate intermediate. Residues D740 and D744 each coordinate Mg(2+). A helical transmembrane segment spans residues 807–827 (IVALIVNFVSACIIGSAPLTA). Residues 828 to 829 (VQ) are Cytoplasmic-facing. The next 2 helical transmembrane spans lie at 830–850 (LLWV…TEPP) and 879–899 (GLYQ…LLSI). The Cytoplasmic portion of the chain corresponds to 900-942 (EGPQSDKTINTLIFNSFVFCQVFNEINCREMEKINVLQGIFRN). The next 2 helical transmembrane spans lie at 943 to 963 (WIFV…VEFL) and 974 to 994 (GELW…SVIL). At 995–1021 (KCIPVEFNKTNTKPHGYELIPEGPEIL) the chain is on the cytoplasmic side.

It belongs to the cation transport ATPase (P-type) (TC 3.A.3) family. Type IIB subfamily.

It localises to the membrane. It carries out the reaction Ca(2+)(in) + ATP + H2O = Ca(2+)(out) + ADP + phosphate + H(+). With respect to regulation, activated by calmodulin. Functionally, this magnesium-dependent enzyme catalyzes the hydrolysis of ATP coupled with the translocation of calcium from the cytosol out of the cell, into the endoplasmic reticulum, or into organelles. The protein is Probable calcium-transporting ATPase 6, plasma membrane-type of Oryza sativa subsp. japonica (Rice).